Reading from the N-terminus, the 529-residue chain is Glycerol kinase 5 (529 aa).

T22 and T23 together coordinate ATP. Residues R92, D269, and Q270 each contribute to the glycerol site. 3 residues coordinate ATP: T291, G334, and G434.

The protein belongs to the FGGY kinase family.

The protein resides in the cytoplasm. The catalysed reaction is glycerol + ATP = sn-glycerol 3-phosphate + ADP + H(+). Its pathway is polyol metabolism; glycerol degradation via glycerol kinase pathway; sn-glycerol 3-phosphate from glycerol: step 1/1. Skin-specific kinase that plays a key role in glycerol metabolism, catalyzing its phosphorylation to produce sn-glycerol 3-phosphate. Involved in skin-specific regulation of sterol regulatory element-binding protein (SREBP) processing and lipid biosynthesis. The chain is Glycerol kinase 5 (gk5) from Danio rerio (Zebrafish).